Reading from the N-terminus, the 412-residue chain is Peptidase T (412 aa).

Residue histidine 78 participates in Zn(2+) binding. Residue aspartate 80 is part of the active site. Aspartate 140 provides a ligand contact to Zn(2+). Glutamate 173 serves as the catalytic Proton acceptor. Zn(2+) contacts are provided by glutamate 174, aspartate 196, and histidine 379.

The protein belongs to the peptidase M20B family. It depends on Zn(2+) as a cofactor.

It is found in the cytoplasm. The enzyme catalyses Release of the N-terminal residue from a tripeptide.. Cleaves the N-terminal amino acid of tripeptides. The protein is Peptidase T of Edwardsiella ictaluri (strain 93-146).